Here is a 335-residue protein sequence, read N- to C-terminus: Transaldolase (335 aa).

N-acetylserine is present on S2. The active-site Schiff-base intermediate with substrate is the K144.

It belongs to the transaldolase family. Type 1 subfamily. As to quaternary structure, homodimer.

The enzyme catalyses D-sedoheptulose 7-phosphate + D-glyceraldehyde 3-phosphate = D-erythrose 4-phosphate + beta-D-fructose 6-phosphate. The protein operates within carbohydrate degradation; pentose phosphate pathway; D-glyceraldehyde 3-phosphate and beta-D-fructose 6-phosphate from D-ribose 5-phosphate and D-xylulose 5-phosphate (non-oxidative stage): step 2/3. Its function is as follows. Transaldolase is important for the balance of metabolites in the pentose-phosphate pathway. The sequence is that of Transaldolase (TAL1) from Saccharomyces cerevisiae (strain ATCC 204508 / S288c) (Baker's yeast).